The sequence spans 251 residues: UPF0309 protein SGR_3073 (251 aa).

Residues Val36–Pro221 form the SIS domain.

The protein belongs to the UPF0309 family.

This Streptomyces griseus subsp. griseus (strain JCM 4626 / CBS 651.72 / NBRC 13350 / KCC S-0626 / ISP 5235) protein is UPF0309 protein SGR_3073.